We begin with the raw amino-acid sequence, 314 residues long: DNA-directed RNA polymerase subunit alpha (314 aa).

Residues 1–228 (MIEFEKPNIH…DHLSIFVNLT (228 aa)) form an alpha N-terminal domain (alpha-NTD) region. Positions 245 to 314 (KEKMLEMTIE…DLGLSLRKED (70 aa)) are alpha C-terminal domain (alpha-CTD).

This sequence belongs to the RNA polymerase alpha chain family. Homodimer. The RNAP catalytic core consists of 2 alpha, 1 beta, 1 beta' and 1 omega subunit. When a sigma factor is associated with the core the holoenzyme is formed, which can initiate transcription.

It catalyses the reaction RNA(n) + a ribonucleoside 5'-triphosphate = RNA(n+1) + diphosphate. Its function is as follows. DNA-dependent RNA polymerase catalyzes the transcription of DNA into RNA using the four ribonucleoside triphosphates as substrates. This chain is DNA-directed RNA polymerase subunit alpha, found in Lactiplantibacillus plantarum (strain ATCC BAA-793 / NCIMB 8826 / WCFS1) (Lactobacillus plantarum).